Consider the following 130-residue polypeptide: Small ribosomal subunit protein uS9 (130 aa).

The interval 111-130 (VERKKVGLHKARRATQFSKR) is disordered. Positions 116–130 (VGLHKARRATQFSKR) are enriched in basic residues.

This sequence belongs to the universal ribosomal protein uS9 family.

This Xylella fastidiosa (strain M23) protein is Small ribosomal subunit protein uS9.